The following is a 531-amino-acid chain: Probable inactive beta-glucosidase 25 (531 aa).

The N-terminal stretch at 1–24 (MALKAILFLGLFLVVIVSPITVYG) is a signal peptide. A beta-D-glucoside contacts are provided by residues Q53 and 202 to 203 (NE). Residue E203 is the Proton donor of the active site. C222 and C230 are disulfide-bonded. A beta-D-glucoside contacts are provided by residues F348 and 477-478 (EW).

Belongs to the glycosyl hydrolase 1 family.

The protein is Probable inactive beta-glucosidase 25 of Arabidopsis thaliana (Mouse-ear cress).